The primary structure comprises 693 residues: Polyribonucleotide nucleotidyltransferase (693 aa).

Residues Asp-489 and Asp-495 each contribute to the Mg(2+) site. In terms of domain architecture, KH spans 556–615 (PQIHVMNINPAKIKDVVGRGGATVKGIVEKTGAQIDTSDSGEVKVFAKDKKSMDMAVAMI). In terms of domain architecture, S1 motif spans 625–693 (GQVYKGKIVK…GRVKLSLVAR (69 aa)).

This sequence belongs to the polyribonucleotide nucleotidyltransferase family. Component of the RNA degradosome, which is a multiprotein complex involved in RNA processing and mRNA degradation. Requires Mg(2+) as cofactor.

The protein localises to the cytoplasm. The enzyme catalyses RNA(n+1) + phosphate = RNA(n) + a ribonucleoside 5'-diphosphate. Functionally, involved in mRNA degradation. Catalyzes the phosphorolysis of single-stranded polyribonucleotides processively in the 3'- to 5'-direction. The polypeptide is Polyribonucleotide nucleotidyltransferase (Francisella tularensis subsp. novicida (strain U112)).